Here is a 138-residue protein sequence, read N- to C-terminus: ATP synthase epsilon chain (138 aa).

The protein belongs to the ATPase epsilon chain family. As to quaternary structure, F-type ATPases have 2 components, CF(1) - the catalytic core - and CF(0) - the membrane proton channel. CF(1) has five subunits: alpha(3), beta(3), gamma(1), delta(1), epsilon(1). CF(0) has three main subunits: a, b and c.

Its subcellular location is the cell inner membrane. In terms of biological role, produces ATP from ADP in the presence of a proton gradient across the membrane. The polypeptide is ATP synthase epsilon chain (Trichlorobacter lovleyi (strain ATCC BAA-1151 / DSM 17278 / SZ) (Geobacter lovleyi)).